The chain runs to 146 residues: Large ribosomal subunit protein uL15 (146 aa).

The segment covering 1 to 13 (MKLHELQPAEGSR) has biased composition (basic and acidic residues). A disordered region spans residues 1 to 58 (MKLHELQPAEGSRKVRNRVGRGIGSGNGKTAGKGHKGQKARSGGGVRPGFEGGQNPLY). 2 stretches are compositionally biased toward gly residues: residues 21-31 (RGIGSGNGKTA) and 42-52 (SGGGVRPGFEG).

This sequence belongs to the universal ribosomal protein uL15 family. Part of the 50S ribosomal subunit.

In terms of biological role, binds to the 23S rRNA. The chain is Large ribosomal subunit protein uL15 from Shouchella clausii (strain KSM-K16) (Alkalihalobacillus clausii).